We begin with the raw amino-acid sequence, 151 residues long: 3-hydroxyacyl-[acyl-carrier-protein] dehydratase FabZ (151 aa).

Histidine 54 is a catalytic residue.

It belongs to the thioester dehydratase family. FabZ subfamily.

The protein localises to the cytoplasm. It carries out the reaction a (3R)-hydroxyacyl-[ACP] = a (2E)-enoyl-[ACP] + H2O. Functionally, involved in unsaturated fatty acids biosynthesis. Catalyzes the dehydration of short chain beta-hydroxyacyl-ACPs and long chain saturated and unsaturated beta-hydroxyacyl-ACPs. The polypeptide is 3-hydroxyacyl-[acyl-carrier-protein] dehydratase FabZ (Cronobacter sakazakii (strain ATCC BAA-894) (Enterobacter sakazakii)).